A 274-amino-acid chain; its full sequence is Bis(5'-nucleosyl)-tetraphosphatase, symmetrical (274 aa).

This sequence belongs to the Ap4A hydrolase family.

It carries out the reaction P(1),P(4)-bis(5'-adenosyl) tetraphosphate + H2O = 2 ADP + 2 H(+). Functionally, hydrolyzes diadenosine 5',5'''-P1,P4-tetraphosphate to yield ADP. This chain is Bis(5'-nucleosyl)-tetraphosphatase, symmetrical, found in Erwinia tasmaniensis (strain DSM 17950 / CFBP 7177 / CIP 109463 / NCPPB 4357 / Et1/99).